The following is a 120-amino-acid chain: Late histone H2A.2.2 (120 aa).

Residues Met1–Ser18 show a composition bias toward basic residues. A disordered region spans residues Met1–Gly22. Position 2 is an N-acetylserine (Ser2). Position 2 is a phosphoserine (Ser2). Gln104 carries the N5-methylglutamine modification. Lys119 participates in a covalent cross-link: Glycyl lysine isopeptide (Lys-Gly) (interchain with G-Cter in ubiquitin).

It belongs to the histone H2A family. The nucleosome is a histone octamer containing two molecules each of H2A, H2B, H3 and H4 assembled in one H3-H4 heterotetramer and two H2A-H2B heterodimers. The octamer wraps approximately 147 bp of DNA. Monoubiquitination of Lys-119 gives a specific tag for epigenetic transcriptional repression. In terms of processing, phosphorylation of Ser-2 directly represses transcription.

The protein localises to the nucleus. Its subcellular location is the chromosome. Core component of nucleosome. Nucleosomes wrap and compact DNA into chromatin, limiting DNA accessibility to the cellular machineries which require DNA as a template. Histones thereby play a central role in transcription regulation, DNA repair, DNA replication and chromosomal stability. DNA accessibility is regulated via a complex set of post-translational modifications of histones, also called histone code, and nucleosome remodeling. The protein is Late histone H2A.2.2 of Psammechinus miliaris (Green sea urchin).